A 162-amino-acid chain; its full sequence is General odorant-binding protein 2 (162 aa).

Positions 1–18 (MTSKSCLLLVAMVTLTTS) are cleaved as a signal peptide. 3 disulfide bridges follow: cysteine 40-cysteine 75, cysteine 71-cysteine 129, and cysteine 118-cysteine 138.

This sequence belongs to the PBP/GOBP family. In terms of tissue distribution, antenna.

In terms of biological role, present in the aqueous fluid surrounding olfactory sensory dendrites and are thought to aid in the capture and transport of hydrophobic odorants into and through this fluid. The chain is General odorant-binding protein 2 from Heliothis virescens (Tobacco budworm moth).